A 526-amino-acid chain; its full sequence is Tyrosine-protein kinase transforming protein Src (526 aa).

The tract at residues methionine 1–glutamate 57 is disordered. Glycine 2 carries N-myristoyl glycine; by host lipidation. Over residues lysine 7 to histidine 25 the composition is skewed to basic and acidic residues. The 62-residue stretch at glycine 81–serine 142 folds into the SH3 domain. An SH2 domain is found at tryptophan 148 to cysteine 245. In terms of domain architecture, Protein kinase spans leucine 267–leucine 517. ATP contacts are provided by residues leucine 273–valine 281 and lysine 295. Residue aspartate 386 is the Proton acceptor of the active site. Tyrosine 416 carries the phosphotyrosine; by autocatalysis modification.

Belongs to the protein kinase superfamily. Tyr protein kinase family. SRC subfamily. As to quaternary structure, homodimer. The phosphorylated form is termed pp60v-src.

The catalysed reaction is L-tyrosyl-[protein] + ATP = O-phospho-L-tyrosyl-[protein] + ADP + H(+). In terms of biological role, this phosphoprotein, required for both the initiation and the maintenance of neoplastic transformation, is a protein kinase that catalyzes the phosphorylation of tyrosine residues in vitro. Causes mitotic slippage in addition to cytokinesis failure in the host cell. Phosphorylates and attenuates the activity of host CDK1, possibly causing the mitotic slippage. The sequence is that of Tyrosine-protein kinase transforming protein Src (V-SRC) from Rous sarcoma virus subgroup A (strain Schmidt-Ruppin) (RSV-SR-A).